The primary structure comprises 153 residues: Movement protein (153 aa).

The segment at 107 to 153 is disordered; that stretch reads SSSARPLPQQPAPSLTSWTPIAKHLHSHQQSISSQSPKLVRGASQRR.

Belongs to the luteoviruses movement protein family.

Transports viral genome to neighboring plant cells directly through plasmosdesmata, without any budding. The movement protein allows efficient cell to cell propagation, by bypassing the host cell wall barrier. This chain is Movement protein, found in Avena byzantina (Oat).